Consider the following 439-residue polypeptide: Hydrogenobyrinate a,c-diamide synthase (439 aa).

Residues 247-439 (RIALAEDGAF…FFHAIARASA (193 aa)) enclose the GATase cobBQ-type domain. Cysteine 329 serves as the catalytic Nucleophile.

This sequence belongs to the CobB/CbiA family. Mg(2+) is required as a cofactor.

The catalysed reaction is hydrogenobyrinate + 2 L-glutamine + 2 ATP + 2 H2O = hydrogenobyrinate a,c-diamide + 2 L-glutamate + 2 ADP + 2 phosphate + 2 H(+). It participates in cofactor biosynthesis; adenosylcobalamin biosynthesis; cob(II)yrinate a,c-diamide from precorrin-2 (aerobic route): step 9/10. Its function is as follows. Catalyzes the ATP-dependent amidation of the two carboxylate groups at positions a and c of hydrogenobyrinate, using either L-glutamine or ammonia as the nitrogen source. This Mesorhizobium japonicum (strain LMG 29417 / CECT 9101 / MAFF 303099) (Mesorhizobium loti (strain MAFF 303099)) protein is Hydrogenobyrinate a,c-diamide synthase.